The sequence spans 185 residues: MISVNDFRTGLTIEVDGEIWRVLEFQHVKPGKGAAFVRSKLRNLRTGAIQERTFRAGEKVNRAQIDTRKMQYLYANGDLHVFMDMETYEQIELPAKQIEYELKFLKENMEVFIMMYQGETIGVELPNTVELKVVETEPGIKGDTASGGSKPAKLETGLVVQVPFFVNEGDTLIINTADGTYVSRA.

It belongs to the elongation factor P family.

Its subcellular location is the cytoplasm. Its pathway is protein biosynthesis; polypeptide chain elongation. Functionally, involved in peptide bond synthesis. Stimulates efficient translation and peptide-bond synthesis on native or reconstituted 70S ribosomes in vitro. Probably functions indirectly by altering the affinity of the ribosome for aminoacyl-tRNA, thus increasing their reactivity as acceptors for peptidyl transferase. In Geobacillus thermodenitrificans (strain NG80-2), this protein is Elongation factor P.